The sequence spans 289 residues: Oxaloacetate decarboxylase (289 aa).

Ser-50 serves as a coordination point for substrate. A Mg(2+)-binding site is contributed by Asp-88. The substrate site is built by Arg-159 and His-235.

The protein belongs to the isocitrate lyase family. Oxaloacetate decarboxylase subfamily. As to quaternary structure, homotetramer; dimer of dimers. It depends on Mg(2+) as a cofactor.

The enzyme catalyses oxaloacetate + H(+) = pyruvate + CO2. In terms of biological role, catalyzes the decarboxylation of oxaloacetate into pyruvate. Seems to play a role in maintaining cellular concentrations of bicarbonate and pyruvate. The sequence is that of Oxaloacetate decarboxylase from Pseudomonas fluorescens (strain SBW25).